A 262-amino-acid polypeptide reads, in one-letter code: MKTPFGKSPGQRSRADAGHAGVSASMMKKRTSHKKHRNNVGPSKPISQPRRNIVGCRIQHGWKEGSGPVTQWKGTVLDQVPVNPSLYLIKYDGFDCVYGLELHKDERVSALEVLPDRVASSRISDAHLADTMIGKAVEHMFETEDGSKDEWRGMVLARAPIMNTWFYITYEKDPVLYMYQLLDDYKEGDLRIMPDSNDSPPAEREPGEVVDSLVGKQVEYAKEDGSKRTGMVIHQVEAKPSVYFIKFDDDFHIYVYDLVKTS.

The tract at residues 1–50 (MKTPFGKSPGQRSRADAGHAGVSASMMKKRTSHKKHRNNVGPSKPISQPR) is disordered. Basic residues predominate over residues 27 to 38 (MKKRTSHKKHRN).

Belongs to the SPIN/STSY family. Expressed in several tissues including testis.

It localises to the nucleus. May play a role in mitosis. This chain is Spindlin-Z (SPINZ), found in Gallus gallus (Chicken).